We begin with the raw amino-acid sequence, 223 residues long: Proteasome subunit beta (223 aa).

Residues 1-6 (MDTMKG) constitute a propeptide, removed in mature form; by autocatalysis. The Nucleophile role is filled by Thr-7.

Belongs to the peptidase T1B family. As to quaternary structure, the 20S proteasome core is composed of 14 alpha and 14 beta subunits that assemble into four stacked heptameric rings, resulting in a barrel-shaped structure. The two inner rings, each composed of seven catalytic beta subunits, are sandwiched by two outer rings, each composed of seven alpha subunits. The catalytic chamber with the active sites is on the inside of the barrel. Has a gated structure, the ends of the cylinder being occluded by the N-termini of the alpha-subunits. Is capped at one or both ends by the proteasome regulatory ATPase, PAN.

The protein resides in the cytoplasm. It catalyses the reaction Cleavage of peptide bonds with very broad specificity.. The formation of the proteasomal ATPase PAN-20S proteasome complex, via the docking of the C-termini of PAN into the intersubunit pockets in the alpha-rings, triggers opening of the gate for substrate entry. Interconversion between the open-gate and close-gate conformations leads to a dynamic regulation of the 20S proteasome proteolysis activity. In terms of biological role, component of the proteasome core, a large protease complex with broad specificity involved in protein degradation. In Methanocaldococcus vulcanius (strain ATCC 700851 / DSM 12094 / M7) (Methanococcus vulcanius), this protein is Proteasome subunit beta.